We begin with the raw amino-acid sequence, 273 residues long: Anthranilate synthase beta subunit 2, chloroplastic (273 aa).

The N-terminal 36 residues, 1 to 36, are a transit peptide targeting the chloroplast; sequence MAATTLYNSCLLQPKYGFTTRRLNQSLVNSLTNPTR. In terms of domain architecture, Glutamine amidotransferase type-1 spans 71–270; it reads PIIVIDNYDS…IKLVEKKESE (200 aa). Cys-149 functions as the Nucleophile in the catalytic mechanism. Residues His-244 and Glu-246 contribute to the active site.

In terms of assembly, heterotetramer consisting of two non-identical subunits: a beta subunit and a large alpha subunit.

It localises to the plastid. Its subcellular location is the chloroplast. It carries out the reaction chorismate + L-glutamine = anthranilate + pyruvate + L-glutamate + H(+). It functions in the pathway amino-acid biosynthesis; L-tryptophan biosynthesis; L-tryptophan from chorismate: step 1/5. Its activity is regulated as follows. Feedback inhibition by tryptophan. Part of a heterotetrameric complex that catalyzes the two-step biosynthesis of anthranilate, an intermediate in the biosynthesis of L-tryptophan. In the first step, the glutamine-binding beta subunit of anthranilate synthase (AS) provides the glutamine amidotransferase activity which generates ammonia as a substrate that, along with chorismate, is used in the second step, catalyzed by the large alpha subunit of AS to produce anthranilate. This Arabidopsis thaliana (Mouse-ear cress) protein is Anthranilate synthase beta subunit 2, chloroplastic (ASB2).